Reading from the N-terminus, the 144-residue chain is Neuritin-A (144 aa).

Positions 1–27 are cleaved as a signal peptide; the sequence is MGLKLSGRYIFLVLAVHLAYLLQAVKA. A lipid anchor (GPI-anchor amidated serine) is attached at Ser-114. A propeptide spans 115 to 144 (removed in mature form); sequence AGAPGQRLLFPAFLPLLMVFLSTLFILVLQ.

This sequence belongs to the neuritin family. In terms of tissue distribution, expressed in sensory regions of the brain including the visual, auditory and olfactory systems. Within the retina, only expressed in the retinal ganglion cells. Concentrated in axon tracts including retinal axons.

The protein resides in the cell membrane. Functionally, modulates postsynaptic dendritic arbor elaboration and synaptic maturation. The protein is Neuritin-A (nrn1-a) of Xenopus laevis (African clawed frog).